The primary structure comprises 410 residues: Putative ankyrin repeat protein FPV240 (410 aa).

ANK repeat units lie at residues 33 to 62 (NGYS…YPDY), 66 to 95 (DIES…FIND), 100 to 129 (KGNT…DTDV), 133 to 162 (DRFT…CTNI), 166 to 195 (YGCT…NIDY), and 200 to 229 (PCVT…DSNI).

The sequence is that of Putative ankyrin repeat protein FPV240 from Vertebrata (FPV).